The sequence spans 89 residues: UPF0237 protein CA_C0478 (89 aa).

The ACT domain maps to 4–78 (IITVIGKDKV…KKLGVSIKIQ (75 aa)).

The protein belongs to the UPF0237 family.

The protein is UPF0237 protein CA_C0478 of Clostridium acetobutylicum (strain ATCC 824 / DSM 792 / JCM 1419 / IAM 19013 / LMG 5710 / NBRC 13948 / NRRL B-527 / VKM B-1787 / 2291 / W).